Reading from the N-terminus, the 713-residue chain is Polyribonucleotide nucleotidyltransferase (713 aa).

Mg(2+) contacts are provided by Asp498 and Asp504. The region spanning 565-631 (PRILSLKVPV…RIEDLTREAK (67 aa)) is the KH domain. Residues 633-701 (GEIYEGTVTR…ERGKIDLIRP (69 aa)) enclose the S1 motif domain.

The protein belongs to the polyribonucleotide nucleotidyltransferase family. Mg(2+) serves as cofactor.

The protein localises to the cytoplasm. The catalysed reaction is RNA(n+1) + phosphate = RNA(n) + a ribonucleoside 5'-diphosphate. Its function is as follows. Involved in mRNA degradation. Catalyzes the phosphorolysis of single-stranded polyribonucleotides processively in the 3'- to 5'-direction. The sequence is that of Polyribonucleotide nucleotidyltransferase from Thermus thermophilus.